A 2497-amino-acid chain; its full sequence is Polyprotein P1234 (2497 aa).

The 232-residue stretch at 28-259 folds into the Alphavirus-like MT domain; sequence EAKQVTDNDH…EKRDLLRSWH (232 aa). The tract at residues 244–263 is nsP1 membrane-binding; that stretch reads GSTIYHEKRDLLRSWHLPSV. Cysteine 419 is lipidated: S-palmitoyl cysteine; by host. The (+)RNA virus helicase ATP-binding domain maps to 690-841; sequence ELVDPPFHEF…HEICTQVFHK (152 aa). Residue 721–728 coordinates a ribonucleoside 5'-triphosphate; it reads GVPGSGKS. The 149-residue stretch at 842-990 folds into the (+)RNA virus helicase C-terminal domain; sequence SISRRCTKSV…MEEWQAEHDA (149 aa). In terms of domain architecture, Peptidase C9 spans 1003 to 1322; sequence DVFQNKANVC…STLTNIYTGS (320 aa). The interval 1004 to 1023 is nucleolus localization signal; it reads VFQNKANVCWAKALVPVLKT. Catalysis depends on cysteine 1012, which acts as the For cysteine protease nsP2 activity. Residues 1056–1065 carry the Nuclear export signal motif; that stretch reads VRFFGLDLDS. Histidine 1081 serves as the catalytic For cysteine protease nsP2 activity. The Nuclear localization signal motif lies at 1179-1183; that stretch reads SGKTV. A Macro domain is found at 1328 to 1489; it reads GCAPSYHVVR…TLKEVVARRE (162 aa). ADP-D-ribose-binding residues include aspartate 1339, asparagine 1353, glycine 1361, glycine 1441, isoleucine 1442, and phenylalanine 1443. 4 residues coordinate Zn(2+): cysteine 1596, cysteine 1598, cysteine 1621, and cysteine 1639. 2 disordered regions span residues 1774-1806 and 1827-1865; these read IPRP…SVDS and APRT…NPPG. The segment at 1856–1877 is binding to host FXR family members; sequence RSSLASNPPGVNRVITREEFEA. One can recognise a RdRp catalytic domain in the interval 2254 to 2369; sequence DWVLETDIAS…KGVKSDKLMA (116 aa).

In terms of assembly, interacts with non-structural protein 3. Interacts with RNA-directed RNA polymerase nsP4. Interacts with protease nsP2. interacts with itself. Interacts with mRNA-capping enzyme nsP1. Interacts with host DDX1. Interacts with host DDX3. Interacts (via C-terminus) with host FXR1; this interaction inhibits the formation of host stress granules on viral mRNAs and the nsp3-FXR1 complexes bind viral RNAs and probably orchestrate the assembly of viral replication complexes. Interacts (via C-terminus) with host FXR2; this interaction inhibits the formation of host stress granules on viral mRNAs and the nsp3-FXR2 complexes bind viral RNAs and probably orchestrate the assembly of viral replication complexes. Interacts (via C-terminus) with host FMR1; this interaction inhibits the formation of host stress granules on viral mRNAs and the nsp3-FMR1 complexes bind viral RNAs and probably orchestrate the assembly of viral replication complexes. As to quaternary structure, interacts with mRNA-capping enzyme nsP1. Interacts with protease nsP2. interacts with itself. In terms of assembly, interacts with RNA-directed RNA polymerase nsP4. Interacts with mRNA-capping enzyme nsP1. Interacts with KPNA1/karyopherin-alpha1; this interaction probably allows the active transport of protease nsP2 into the host nucleus. It depends on Mg(2+) as a cofactor. The cofactor is Mn(2+). In terms of processing, specific enzymatic cleavages in vivo yield mature proteins. The processing of the polyprotein is temporally regulated. In early stages (1.7 hpi), P1234 is first cleaved in trans through its nsP2 protease activity, releasing P123' and nsP4, which associate to form the early replication complex. At the same time, P1234 is also cut at the nsP1/nsP2 site early in infection but with lower efficiency. After replication of the viral minus-strand RNAs (4 hpi), the polyproteins are cut at the nsP1/nsP2 and nsP2/nsP3 sites very efficiently, preventing accumulation of P123' and P1234 and allowing the formation of the late replication complex. NsP3'/nsP4 site is not cleaved anymore and P34 is produced rather than nsP4. Post-translationally, specific enzymatic cleavages in vivo yield mature proteins. The processing of the polyprotein is temporally regulated. In early stages (1.7 hpi), P123 is cleaved at the nsP1/nsP2 site with low efficiency. After replication of the viral minus-strand RNAs (4 hpi), the polyproteins are cut at the nsP1/nsP2 and nsP2/nsP3 sites very efficiently, preventing accumulation of P123 and allowing the formation of the late replication complex. Specific enzymatic cleavages in vivo yield mature proteins. The processing of the polyprotein is temporally regulated. In early stages (1.7 hpi), P123' is cleaved at the nsP1/nsP2 site with low efficiency. After replication of the viral minus-strand RNAs (4 hpi), the polyproteins are cut at the nsP1/nsP2 and nsP2/nsP3 sites very efficiently, preventing accumulation of P123' and allowing the formation of the late replication complex. In terms of processing, palmitoylated by host palmitoyltransferases ZDHHC2 and ZDHHC19. Post-translationally, phosphorylated by host on serines and threonines. Ubiquitinated; targets the protein for rapid degradation via the ubiquitin system. Nsp4 is present in extremely low quantities due to low frequency of translation through the amber stop-codon and the degradation by the ubiquitin pathway.

The protein resides in the host cytoplasmic vesicle membrane. It localises to the host cell membrane. The protein localises to the host cell projection. Its subcellular location is the host filopodium. It is found in the host nucleus. The protein resides in the host cytoplasm. The catalysed reaction is GTP + S-adenosyl-L-methionine = N(7)-methyl-GTP + S-adenosyl-L-homocysteine. It catalyses the reaction N(7)-methyl-GTP + L-histidyl-[protein] = N(tele)-(N(7)-methylguanosine 5'-phospho)-L-histidyl-[protein] + diphosphate. It carries out the reaction N(tele)-(N(7)-methylguanosine 5'-phospho)-L-histidyl-[protein] + a 5'-end diphospho-(purine-ribonucleoside) in mRNA + H(+) = a 5'-end (N(7)-methyl 5'-triphosphoguanosine)-(purine-ribonucleoside) in mRNA + L-histidyl-[protein]. The enzyme catalyses a 5'-end triphospho-ribonucleoside in mRNA + H2O = a 5'-end diphospho-ribonucleoside in mRNA + phosphate + H(+). The catalysed reaction is a ribonucleoside 5'-triphosphate + H2O = a ribonucleoside 5'-diphosphate + phosphate + H(+). It catalyses the reaction ATP + H2O = ADP + phosphate + H(+). It carries out the reaction RNA(n) + a ribonucleoside 5'-triphosphate = RNA(n+1) + diphosphate. The enzyme catalyses 4-O-(ADP-D-ribosyl)-L-aspartyl-[protein] + H2O = L-aspartyl-[protein] + ADP-D-ribose + H(+). The catalysed reaction is 5-O-(ADP-D-ribosyl)-L-glutamyl-[protein] + H2O = L-glutamyl-[protein] + ADP-D-ribose + H(+). It catalyses the reaction RNA(n) + ATP = RNA(n)-3'-adenine ribonucleotide + diphosphate. It carries out the reaction ADP-alpha-D-ribose 1''-phosphate + H2O = ADP-D-ribose + phosphate. With respect to regulation, inhibited by sinefungin. In terms of biological role, inactive precursor of the viral replicase, which is activated by cleavages carried out by the viral protease nsP2. The early replication complex formed by the polyprotein P123 and nsP4 synthesizes the minus-strand RNAs (antigenome). Polyprotein P123 is a short-lived polyprotein that accumulates during early stage of infection. As soon P123 is cleaved into mature proteins, the plus-strand RNAs synthesis begins. Functionally, the early replication complex formed by the polyprotein P123' and nsP4 synthesizes minus-strand RNAs (antigenome). Polyprotein P123' is a short-lived polyprotein that accumulates during early stage of infection. As soon P123' is cleaved into mature proteins, the plus-strand RNAs synthesis begins. Its function is as follows. Cytoplasmic capping enzyme that catalyzes two virus-specific reactions: methyltransferase and nsP1 guanylyltransferase. mRNA-capping is necessary since all viral RNAs are synthesized in the cytoplasm, and host capping enzymes are restricted to the nucleus. The enzymatic reaction involves a covalent link between 7-methyl-GMP and nsP1, whereas eukaryotic capping enzymes form a covalent complex only with GMP. NsP1 capping consists in the following reactions: GTP is first methylated into 7-methyl-GMP and then is covalently linked to nsP1 to form the m7GMp-nsP1 complex from which 7-methyl-GMP complex is transferred to the mRNA to create the cap structure. NsP1 is also needed for the initiation of the minus-strand RNAs synthesis. Probably serves as a membrane anchor for the replication complex composed of nsP1-nsP4. Nsp1 is needed for the initiation of the minus-strand RNAs synthesis. Palmitoylated nsP1 is remodeling host cell cytoskeleton, and induces filopodium-like structure formation at the surface of the host cell. In terms of biological role, multifunctional protein whose N-terminus is part of the RNA polymerase complex and displays NTPase, RNA triphosphatase and helicase activities. NTPase and RNA triphosphatase are involved in viral RNA capping and helicase keeps a check on the dsRNA replication intermediates. The C-terminus harbors a protease that specifically cleaves the polyproteins and releases the mature proteins. Required for the shutoff of minus-strand RNAs synthesis. Inhibits host translation to ensure maximal viral gene expression and evade host immune response. Seems to be essential for minus-strand RNAs and subgenomic 26S mRNAs synthesis. Displays mono-ADP-ribosylhydrolase activity. ADP-ribosylation is a post-translational modification that controls various processes of the host cell and the virus probably needs to revert it for optimal viral replication. Binds proteins of FXR family and sequesters them into the viral RNA replication complexes thereby inhibiting the formation of host stress granules on viral mRNAs. The nsp3-FXR complexes bind viral RNAs and probably orchestrate the assembly of viral replication complexes, thanks to the ability of FXR family members to self-assemble and bind DNA. Functionally, seems to be essential for minus-strand RNAs and subgenomic 26S mRNAs synthesis. Displays mono-ADP-ribosylhydrolase activity. ADP-ribosylation is a post-translational modification that controls various processes of the host cell and the virus probably needs to revert it for optimal viral replication. Binds proteins of FXR family and sequesters them into the viral RNA replication complexes thereby inhibiting the formation of host stress granules on viral mRNAs. The nsp3'-FXR complexes bind viral RNAs and probably orchestrate the assembly of viral replication complexes, thanks to the ability of FXR family members to self-assemble and bind DNA. Its function is as follows. RNA dependent RNA polymerase. Replicates genomic and antigenomic RNA by recognizing replications specific signals. The early replication complex formed by the polyprotein P123 and nsP4 synthesizes minus-strand RNAs. The late replication complex composed of fully processed nsP1-nsP4 is responsible for the production of genomic and subgenomic plus-strand RNAs. In Venezuelan equine encephalitis virus (VEEV), this protein is Polyprotein P1234.